Reading from the N-terminus, the 342-residue chain is Ribosomal RNA small subunit methyltransferase C (342 aa).

This sequence belongs to the methyltransferase superfamily. RsmC family. In terms of assembly, monomer.

The protein resides in the cytoplasm. It catalyses the reaction guanosine(1207) in 16S rRNA + S-adenosyl-L-methionine = N(2)-methylguanosine(1207) in 16S rRNA + S-adenosyl-L-homocysteine + H(+). Specifically methylates the guanine in position 1207 of 16S rRNA in the 30S particle. The protein is Ribosomal RNA small subunit methyltransferase C of Salmonella enteritidis PT4 (strain P125109).